The chain runs to 185 residues: Adenylyl-sulfate kinase (185 aa).

Gly13–Ser20 lines the ATP pocket. Ser86 serves as the catalytic Phosphoserine intermediate.

It belongs to the APS kinase family.

It carries out the reaction adenosine 5'-phosphosulfate + ATP = 3'-phosphoadenylyl sulfate + ADP + H(+). It participates in sulfur metabolism; hydrogen sulfide biosynthesis; sulfite from sulfate: step 2/3. Catalyzes the synthesis of activated sulfate. In Myxococcus xanthus (strain DK1622), this protein is Adenylyl-sulfate kinase.